Reading from the N-terminus, the 289-residue chain is Proteasome subunit beta (289 aa).

Residues 1-59 constitute a propeptide, removed in mature form; by autocatalysis; that stretch reads MEHTPRNAGFALPAAYMSTMTSSFIDFLKAEAPDLLPRARVENMPAVPGGGSAFEPPHG. T60 acts as the Nucleophile in catalysis.

Belongs to the peptidase T1B family. The 20S proteasome core is composed of 14 alpha and 14 beta subunits that assemble into four stacked heptameric rings, resulting in a barrel-shaped structure. The two inner rings, each composed of seven catalytic beta subunits, are sandwiched by two outer rings, each composed of seven alpha subunits. The catalytic chamber with the active sites is on the inside of the barrel. Has a gated structure, the ends of the cylinder being occluded by the N-termini of the alpha-subunits. Is capped by the proteasome-associated ATPase, ARC.

The protein resides in the cytoplasm. It catalyses the reaction Cleavage of peptide bonds with very broad specificity.. The protein operates within protein degradation; proteasomal Pup-dependent pathway. With respect to regulation, the formation of the proteasomal ATPase ARC-20S proteasome complex, likely via the docking of the C-termini of ARC into the intersubunit pockets in the alpha-rings, may trigger opening of the gate for substrate entry. Interconversion between the open-gate and close-gate conformations leads to a dynamic regulation of the 20S proteasome proteolysis activity. Component of the proteasome core, a large protease complex with broad specificity involved in protein degradation. The chain is Proteasome subunit beta from Saccharomonospora viridis (strain ATCC 15386 / DSM 43017 / JCM 3036 / CCUG 5913 / NBRC 12207 / NCIMB 9602 / P101) (Thermoactinomyces viridis).